Here is a 299-residue protein sequence, read N- to C-terminus: Ribosomal RNA small subunit methyltransferase H (299 aa).

S-adenosyl-L-methionine-binding positions include 24 to 26 (GGH), D43, F68, D90, and Q97.

This sequence belongs to the methyltransferase superfamily. RsmH family.

The protein localises to the cytoplasm. It catalyses the reaction cytidine(1402) in 16S rRNA + S-adenosyl-L-methionine = N(4)-methylcytidine(1402) in 16S rRNA + S-adenosyl-L-homocysteine + H(+). Specifically methylates the N4 position of cytidine in position 1402 (C1402) of 16S rRNA. This Francisella tularensis subsp. tularensis (strain WY96-3418) protein is Ribosomal RNA small subunit methyltransferase H.